Reading from the N-terminus, the 355-residue chain is 6-aminohexanoate-oligomer endohydrolase (355 aa).

The active-site Nucleophile is the threonine 267.

Belongs to the peptidase S58 family. As to quaternary structure, heterotetramer composed of 4 alpha/beta heterodimers. In terms of processing, expressed as an inactive precursor that is cleaved autocatalytically at Asn266/Thr267 to generate an active enzyme composed of an alpha subunit and a beta subunit.

The enzyme catalyses [N-(6-aminohexanoyl)]n + H2O = [N-(6-aminohexanoyl)]n-x + [N-(6-aminohexanoyl)]x.. It functions in the pathway xenobiotic degradation; nylon-6 oligomer degradation. Its function is as follows. Involved in the degradation of nylon-6 oligomers. Degrades cyclic and linear oligomers of 6-aminohexanoate (Ahx) with a degree of polymerization greater than three by an endo-type mode. Cannot use Ahx cyclic dimer or the Ahx linear dimer. In Agromyces sp. (strain KY5R), this protein is 6-aminohexanoate-oligomer endohydrolase.